The following is a 212-amino-acid chain: Ribosomal RNA small subunit methyltransferase G (212 aa).

S-adenosyl-L-methionine-binding positions include phenylalanine 78, 96-98 (ESS), 124-125 (VE), and arginine 141.

It belongs to the methyltransferase superfamily. RNA methyltransferase RsmG family.

The protein resides in the cytoplasm. Specifically methylates the N7 position of a guanine in 16S rRNA. In Onion yellows phytoplasma (strain OY-M), this protein is Ribosomal RNA small subunit methyltransferase G.